Consider the following 406-residue polypeptide: Cysteine desulfurase (406 aa).

The residue at position 226 (K226) is an N6-(pyridoxal phosphate)lysine. C364 functions as the Cysteine persulfide intermediate in the catalytic mechanism.

Belongs to the class-V pyridoxal-phosphate-dependent aminotransferase family. Csd subfamily. In terms of assembly, homodimer. Interacts with SufE and the SufBCD complex composed of SufB, SufC and SufD. The interaction with SufE is required to mediate the direct transfer of the sulfur atom from the S-sulfanylcysteine. Requires pyridoxal 5'-phosphate as cofactor.

The protein resides in the cytoplasm. It carries out the reaction (sulfur carrier)-H + L-cysteine = (sulfur carrier)-SH + L-alanine. The enzyme catalyses L-selenocysteine + AH2 = hydrogenselenide + L-alanine + A + H(+). It functions in the pathway cofactor biosynthesis; iron-sulfur cluster biosynthesis. Cysteine desulfurases mobilize the sulfur from L-cysteine to yield L-alanine, an essential step in sulfur metabolism for biosynthesis of a variety of sulfur-containing biomolecules. Component of the suf operon, which is activated and required under specific conditions such as oxidative stress and iron limitation. Acts as a potent selenocysteine lyase in vitro, that mobilizes selenium from L-selenocysteine. Selenocysteine lyase activity is however unsure in vivo. The protein is Cysteine desulfurase of Escherichia coli O6:K15:H31 (strain 536 / UPEC).